The chain runs to 501 residues: Glutamyl-tRNA(Gln) amidotransferase subunit A (501 aa).

Residues K80 and S155 each act as charge relay system in the active site. S179 functions as the Acyl-ester intermediate in the catalytic mechanism.

The protein belongs to the amidase family. GatA subfamily. Heterotrimer of A, B and C subunits.

The catalysed reaction is L-glutamyl-tRNA(Gln) + L-glutamine + ATP + H2O = L-glutaminyl-tRNA(Gln) + L-glutamate + ADP + phosphate + H(+). Allows the formation of correctly charged Gln-tRNA(Gln) through the transamidation of misacylated Glu-tRNA(Gln) in organisms which lack glutaminyl-tRNA synthetase. The reaction takes place in the presence of glutamine and ATP through an activated gamma-phospho-Glu-tRNA(Gln). The chain is Glutamyl-tRNA(Gln) amidotransferase subunit A from Cupriavidus pinatubonensis (strain JMP 134 / LMG 1197) (Cupriavidus necator (strain JMP 134)).